A 269-amino-acid polypeptide reads, in one-letter code: RBPJ-interacting and tubulin-associated protein 1 (269 aa).

Residues 5 to 17 carry the Nuclear export signal motif; it reads VELAVSGIQTLPL. 2 disordered regions span residues 37-101 and 141-269; these read SLFG…NKYR and FWTP…PPWK. Over residues 62 to 77 the composition is skewed to polar residues; it reads RTSGVGTGTSRASGAN. The span at 79-93 shows a compositional bias: low complexity; that stretch reads SCETTSSSGSTPTLT. The short motif at 92-108 is the Nuclear localization signal element; that stretch reads LTPRKKNKYRLISHTPS. The segment at 128–156 is interaction with RBPJ/RBPSUH; the sequence is WMAKGDAAKLHSLFWTPPATPRGSHSPRP. The interval 156–269 is interaction with tubulin; it reads PRETPLRAIH…ATQKPKPPWK (114 aa).

The protein belongs to the RITA family. Interacts with RBPJ/RBPSUH.

It is found in the cytoplasm. Its subcellular location is the nucleus. The protein resides in the cytoskeleton. The protein localises to the microtubule organizing center. It localises to the centrosome. Tubulin-binding protein that acts as a negative regulator of Notch signaling pathway. Shuttles between the cytoplasm and the nucleus and mediates the nuclear export of RBPJ/RBPSUH, thereby preventing the interaction between RBPJ/RBPSUH and NICD product of Notch proteins (Notch intracellular domain), leading to down-regulate Notch-mediated transcription. May play a role in neurogenesis. The polypeptide is RBPJ-interacting and tubulin-associated protein 1 (RITA1) (Ailuropoda melanoleuca (Giant panda)).